A 124-amino-acid chain; its full sequence is MPACRPGPLAGALLLGLLLLGLPRVPGGEVEKTGVCPQLQADLNCTQECVSDAQCADNLKCCQAGCATICHLPNEKEGSCPQVNTDFPQLGLCQDQCQVDSHCPGLLKCCYNGCGKVSCVTPIF.

The N-terminal stretch at 1-27 (MPACRPGPLAGALLLGLLLLGLPRVPG) is a signal peptide. WAP domains lie at 29–73 (EVEK…CHLP) and 74–123 (NEKE…VTPI). Cystine bridges form between Cys-36/Cys-62, Cys-45/Cys-66, Cys-49/Cys-61, Cys-55/Cys-70, Cys-80/Cys-110, Cys-93/Cys-114, Cys-97/Cys-109, and Cys-103/Cys-119. Asn-44 is a glycosylation site (N-linked (GlcNAc...) asparagine).

As to quaternary structure, homotrimer; disulfide-linked. In terms of tissue distribution, epididymis. Highest levels are found in the caput and proximal cauda regions. Lower levels in the distal cauda. Not detected in the efferent ducts.

The protein resides in the secreted. Broad range protease inhibitor. Possible function in sperm maturation. This chain is WAP four-disulfide core domain protein 2 (WFDC2), found in Canis lupus familiaris (Dog).